Consider the following 20-residue polypeptide: Brevinin-1LT (20 aa).

Cysteines 14 and 20 form a disulfide.

Expressed by the skin glands.

The protein localises to the secreted. In terms of biological role, antimicrobial peptide. In Rana latastei (Italian agile frog), this protein is Brevinin-1LT.